We begin with the raw amino-acid sequence, 446 residues long: Butyryl-CoA:acetate CoA-transferase (446 aa).

A CoA-binding site is contributed by 220–224; the sequence is GIGGM. The active-site 5-glutamyl coenzyme A thioester intermediate is glutamate 245. 3 residues coordinate CoA: valine 320, glycine 343, and lysine 370.

Belongs to the acetyl-CoA hydrolase/transferase family. Butyryl-CoA CoA-transferase subfamily.

It carries out the reaction butanoate + acetyl-CoA = butanoyl-CoA + acetate. The enzyme catalyses propanoate + acetyl-CoA = propanoyl-CoA + acetate. It participates in lipid metabolism; butanoate metabolism. Coenzyme A-transferase that converts butyryl-CoA to butyrate. Can also use proprionyl-CoA as substrate in vitro. The chain is Butyryl-CoA:acetate CoA-transferase from Anaerostipes caccae (strain DSM 14662 / CCUG 47493 / JCM 13470 / NCIMB 13811 / L1-92).